A 169-amino-acid polypeptide reads, in one-letter code: uncharacterized protein (169 aa).

This is an uncharacterized protein from Mycoplasma genitalium (strain ATCC 33530 / DSM 19775 / NCTC 10195 / G37) (Mycoplasmoides genitalium).